The following is a 355-amino-acid chain: Probable tRNA-dihydrouridine synthase 1 (355 aa).

FMN is bound by residues 48–50 (PLS) and glutamine 102. Cysteine 132 acts as the Proton donor in catalysis. Residues lysine 171, 232–234 (NGD), and 256–257 (SR) contribute to the FMN site.

It belongs to the Dus family. Requires FMN as cofactor.

It carries out the reaction a 5,6-dihydrouridine in tRNA + NAD(+) = a uridine in tRNA + NADH + H(+). The catalysed reaction is a 5,6-dihydrouridine in tRNA + NADP(+) = a uridine in tRNA + NADPH + H(+). In terms of biological role, catalyzes the synthesis of 5,6-dihydrouridine (D), a modified base found in the D-loop of most tRNAs, via the reduction of the C5-C6 double bond in target uridines. The polypeptide is Probable tRNA-dihydrouridine synthase 1 (dus1) (Synechocystis sp. (strain ATCC 27184 / PCC 6803 / Kazusa)).